The sequence spans 560 residues: Factor VII-activating protease (560 aa).

Residues 1 to 23 form the signal peptide; the sequence is MFARMSDLHVLLLMALVGKTACG. The N-linked (GlcNAc...) asparagine glycan is linked to N54. EGF-like domains follow at residues 73–109, 111–148, and 150–188; these read QADP…NKCQ, VQNT…PSCS, and VVPV…KFCE. Intrachain disulfides connect C77–C88, C82–C97, C99–C108, C115–C125, C120–C136, C138–C147, C154–C165, C159–C176, C178–C187, C194–C276, C215–C257, C246–C271, C301–C435, C347–C363, C355–C424, C447–C515, C477–C493, and C505–C533. A Kringle domain is found at 193–276; the sequence is DCYVGDGYSY…KWEYCDVSAC (84 aa). A glycan (N-linked (GlcNAc...) asparagine) is linked at N207. The region spanning 314-555 is the Peptidase S1 domain; that stretch reads IYGGFKSTAG…FLNWIKATIK (242 aa). Active-site charge relay system residues include H362 and D411. The active-site Charge relay system is the S509.

Belongs to the peptidase S1 family. In terms of assembly, heterodimer; disulfide-linked. Heterodimer of a 50 kDa heavy and a 27 kDa light chain linked by a disulfide bond. Post-translationally, proteolytic cleavage at Gly-23 or Met-27 can give rise to the 50 kDa heavy chain (HC) and cleavage at Arg-313 or Lys-319 can give rise to the 27 kDa light chain (LC). The HC can undergo further proteolytic cleavage giving rise to a 26 kDa fragment. The LC can undergo further proteolytic cleavage at Arg-313 leading to a 17-kDa fragment and at Arg-480 leading to a 8-kDa fragment. As to expression, ubiquitously expressed.

It localises to the secreted. Functionally, cleaves the alpha-chain at multiple sites and the beta-chain between 'Lys-53' and 'Lys-54' but not the gamma-chain of fibrinogen and therefore does not initiate the formation of the fibrin clot and does not cause the fibrinolysis directly. It does not cleave (activate) prothrombin and plasminogen but converts the inactive single chain urinary plasminogen activator (pro-urokinase) to the active two chain form. Activates coagulation factor VII. May function as a tumor suppressor negatively regulating cell proliferation and cell migration. The sequence is that of Factor VII-activating protease from Homo sapiens (Human).